Consider the following 677-residue polypeptide: Forkhead box protein P1 (677 aa).

The span at 1–18 shows a compositional bias: polar residues; that stretch reads MMQESGTETKSNGSAIQN. The interval 1–43 is disordered; sequence MMQESGTETKSNGSAIQNGSGGSNHLLECGGLREGRSNGETPA. Ser-83 bears the Phosphoserine mark. Positions 270–283 are enriched in polar residues; the sequence is IMNPHASTNGQLSV. The interval 270 to 298 is disordered; sequence IMNPHASTNGQLSVHTPKRESLSHEEHPH. The segment covering 286–298 has biased composition (basic and acidic residues); the sequence is PKRESLSHEEHPH. Residue Lys-287 forms a Glycyl lysine isopeptide (Lys-Gly) (interchain with G-Cter in SUMO2) linkage. A C2H2-type zinc finger spans residues 306–331; that stretch reads GVCKWPGCEAVCEDFQSFLKHLNSEH. Residues 348–369 are leucine-zipper; that stretch reads VQQLELQLAKDKERLQAMMTHL. Glycyl lysine isopeptide (Lys-Gly) (interchain with G-Cter in SUMO2) cross-links involve residues Lys-372 and Lys-377. Residues 382–386 form a CTBP1-binding region; that stretch reads PLNLV. Residues 390 to 403 show a composition bias toward polar residues; the sequence is TLSKSASEASPQSL. The segment at 390–422 is disordered; sequence TLSKSASEASPQSLPHTPTTPTAPLTPVTQGPS. Positions 404–418 are enriched in low complexity; sequence PHTPTTPTAPLTPVT. Lys-442 participates in a covalent cross-link: Glycyl lysine isopeptide (Lys-Gly) (interchain with G-Cter in SUMO2). Positions 465 to 555 form a DNA-binding region, fork-head; that stretch reads RPPFTYASLI…PQKISGNPSL (91 aa). Residues 611-677 are disordered; that stretch reads EHTNSNESDS…EDEPVNEDME (67 aa). Polar residues predominate over residues 612 to 623; it reads HTNSNESDSSPG. Phosphothreonine is present on Thr-653. Residue Ser-658 is modified to Phosphoserine. A compositionally biased stretch (acidic residues) spans 667 to 677; that stretch reads YEDEPVNEDME.

In terms of assembly, forms homodimers and heterodimers with FOXP2 and FOXP4. Dimerization is required for DNA-binding. Self-associates. Interacts with CTBP1. Interacts with NCOR2 and AR. Interacts with FOXP2. Interacts with TBR1. Interacts with AURKA; this interaction facilitates the phosphorylation of FOXP1, which suppresses the expression of FBXL7. Interacts with ZMYM2. In terms of tissue distribution, isoform 8 is specifically expressed in embryonic stem cells.

The protein localises to the nucleus. In terms of biological role, transcriptional repressor. Can act with CTBP1 to synergistically repress transcription but CTPBP1 is not essential. Plays an important role in the specification and differentiation of lung epithelium. Acts cooperatively with FOXP4 to regulate lung secretory epithelial cell fate and regeneration by restricting the goblet cell lineage program; the function may involve regulation of AGR2. Essential transcriptional regulator of B-cell development. Involved in regulation of cardiac muscle cell proliferation. Involved in the columnar organization of spinal motor neurons. Promotes the formation of the lateral motor neuron column (LMC) and the preganglionic motor column (PGC) and is required for respective appropriate motor axon projections. The segment-appropriate generation of spinal cord motor columns requires cooperation with other Hox proteins. Can regulate PITX3 promoter activity; may promote midbrain identity in embryonic stem cell-derived dopamine neurons by regulating PITX3. Negatively regulates the differentiation of T follicular helper cells T(FH)s. Involved in maintenance of hair follicle stem cell quiescence; the function probably involves regulation of FGF18. Represses transcription of various pro-apoptotic genes and cooperates with NF-kappa B-signaling in promoting B-cell expansion by inhibition of caspase-dependent apoptosis. Binds to CSF1R promoter elements and is involved in regulation of monocyte differentiation and macrophage functions; repression of CSF1R in monocytes seems to involve NCOR2 as corepressor. Involved in endothelial cell proliferation, tube formation and migration indicative for a role in angiogenesis; the role in neovascularization seems to implicate suppression of SEMA5B. Can negatively regulate androgen receptor signaling. Acts as a transcriptional activator of the FBXL7 promoter; this activity is regulated by AURKA. Involved in transcriptional regulation in embryonic stem cells (ESCs). Stimulates expression of transcription factors that are required for pluripotency and decreases expression of differentiation-associated genes. Has distinct DNA-binding specifities as compared to the canonical form and preferentially binds DNA with the sequence 5'-CGATACAA-3' (or closely related sequences). Promotes ESC self-renewal and pluripotency. The chain is Forkhead box protein P1 (FOXP1) from Homo sapiens (Human).